The following is a 475-amino-acid chain: Aspartyl/glutamyl-tRNA(Asn/Gln) amidotransferase subunit B (475 aa).

It belongs to the GatB/GatE family. GatB subfamily. Heterotrimer of A, B and C subunits.

The catalysed reaction is L-glutamyl-tRNA(Gln) + L-glutamine + ATP + H2O = L-glutaminyl-tRNA(Gln) + L-glutamate + ADP + phosphate + H(+). It carries out the reaction L-aspartyl-tRNA(Asn) + L-glutamine + ATP + H2O = L-asparaginyl-tRNA(Asn) + L-glutamate + ADP + phosphate + 2 H(+). Functionally, allows the formation of correctly charged Asn-tRNA(Asn) or Gln-tRNA(Gln) through the transamidation of misacylated Asp-tRNA(Asn) or Glu-tRNA(Gln) in organisms which lack either or both of asparaginyl-tRNA or glutaminyl-tRNA synthetases. The reaction takes place in the presence of glutamine and ATP through an activated phospho-Asp-tRNA(Asn) or phospho-Glu-tRNA(Gln). In Chlorobium limicola (strain DSM 245 / NBRC 103803 / 6330), this protein is Aspartyl/glutamyl-tRNA(Asn/Gln) amidotransferase subunit B.